The following is an 89-amino-acid chain: Small ribosomal subunit protein uS17 (89 aa).

This sequence belongs to the universal ribosomal protein uS17 family. In terms of assembly, part of the 30S ribosomal subunit.

Its function is as follows. One of the primary rRNA binding proteins, it binds specifically to the 5'-end of 16S ribosomal RNA. In Coxiella burnetii (strain RSA 493 / Nine Mile phase I), this protein is Small ribosomal subunit protein uS17.